The following is a 564-amino-acid chain: Probable diguanylate cyclase DgcQ (564 aa).

Helical transmembrane passes span 20-40 (LGPG…STLL) and 360-380 (IALT…WYVI). The region spanning 428–563 (HPFSVIQVDL…GRNRVFASDN (136 aa)) is the GGDEF domain. D436 lines the Mg(2+) pocket. Substrate is bound by residues N444, H449, and D453. E479 lines the Mg(2+) pocket. Residue E479 is the Proton acceptor of the active site.

In terms of assembly, homodimer. The cofactor is Mg(2+).

Its subcellular location is the cell inner membrane. It catalyses the reaction 2 GTP = 3',3'-c-di-GMP + 2 diphosphate. It functions in the pathway glycan metabolism; bacterial cellulose biosynthesis. Its pathway is purine metabolism; 3',5'-cyclic di-GMP biosynthesis. Functionally, catalyzes the synthesis of cyclic-di-GMP (c-di-GMP) via the condensation of 2 GTP molecules. Cyclic-di-GMP is a second messenger which controls cell surface-associated traits in bacteria. Involved in the regulation of cellulose production. The protein is Probable diguanylate cyclase DgcQ of Shigella dysenteriae serotype 1 (strain Sd197).